The chain runs to 437 residues: Bystin (437 aa).

Residues Met1–Trp105 form a disordered region. Arg40 carries the omega-N-methylarginine modification. The residue at position 55 (Ser55) is a Phosphoserine. Over residues Ala71 to Thr87 the composition is skewed to basic and acidic residues. Phosphoserine is present on Ser98. Position 156 is a phosphothreonine (Thr156). 2 positions are modified to phosphoserine: Ser167 and Ser414.

This sequence belongs to the bystin family. In terms of assembly, binds trophinin, tastin and cytokeratins. Found in the placenta from the sixth week of pregnancy. Was localized in the cytoplasm of the syncytiotrophoblast in the chorionic villi and in endometrial decidual cells at the uteroplacental interface. After week 10, the level decreased and then disappeared from placental villi.

It is found in the cytoplasm. Its subcellular location is the nucleus. The protein localises to the nucleolus. In terms of biological role, required for processing of 20S pre-rRNA precursor and biogenesis of 40S ribosomal subunits. May be required for trophinin-dependent regulation of cell adhesion during implantation of human embryos. The chain is Bystin from Homo sapiens (Human).